Reading from the N-terminus, the 175-residue chain is MDLKSAIRTIPDYPEPGIQFRDVTTLIGDARAFRVAIDRMVQPWAGAKIDKVAGTEARGFILGGAVAHQLSVGFVPVRKRGKLPWRTLREDYELEYGQDTIEIHVDAIAEGDRVLLVDDLIATGGTAEASIKLLQRAGATVVGATFIIDLPELGGAERIEAMGVPVSSLVAYEGT.

The protein belongs to the purine/pyrimidine phosphoribosyltransferase family. Homodimer.

The protein localises to the cytoplasm. It carries out the reaction AMP + diphosphate = 5-phospho-alpha-D-ribose 1-diphosphate + adenine. It functions in the pathway purine metabolism; AMP biosynthesis via salvage pathway; AMP from adenine: step 1/1. Its function is as follows. Catalyzes a salvage reaction resulting in the formation of AMP, that is energically less costly than de novo synthesis. This chain is Adenine phosphoribosyltransferase, found in Maricaulis maris (strain MCS10) (Caulobacter maris).